We begin with the raw amino-acid sequence, 89 residues long: Small ribosomal subunit protein uS17 (89 aa).

Belongs to the universal ribosomal protein uS17 family. As to quaternary structure, part of the 30S ribosomal subunit.

Its function is as follows. One of the primary rRNA binding proteins, it binds specifically to the 5'-end of 16S ribosomal RNA. The sequence is that of Small ribosomal subunit protein uS17 from Acidovorax ebreus (strain TPSY) (Diaphorobacter sp. (strain TPSY)).